Reading from the N-terminus, the 1035-residue chain is Putative protein FAM47C (1035 aa).

Disordered regions lie at residues 1 to 21 (MGDQRPQDRPSSPGMDSTPWY) and 159 to 797 (LEDA…RRVS). Basic and acidic residues predominate over residues 159 to 173 (LEDAGSCEGQEKTTD). Over residues 380–392 (PEPPKTRVPPLRP) the composition is skewed to pro residues. The span at 478-490 (PPEKDVSHLRPEP) shows a compositional bias: basic and acidic residues. Residues 533–544 (SLHQAPPESSVS) show a composition bias toward polar residues. Basic and acidic residues-rich tracts occupy residues 611-622 (PETRVSHLRPEP), 683-694 (PETRVSHLRPEP), and 753-766 (EPLETRVSHLRPEP).

Belongs to the FAM47 family.

This is Putative protein FAM47C (FAM47C) from Homo sapiens (Human).